The following is a 206-amino-acid chain: Glycerol-3-phosphate acyltransferase (206 aa).

Helical transmembrane passes span 4 to 24, 53 to 73, 86 to 106, 116 to 136, 137 to 157, and 160 to 180; these read TAFA…AVIV, LAAA…VALA, GIAL…FFGF, VGIL…TWLF, MAFV…LAPV, and FFIL…AIVV.

Belongs to the PlsY family. As to quaternary structure, probably interacts with PlsX.

The protein localises to the cell inner membrane. The enzyme catalyses an acyl phosphate + sn-glycerol 3-phosphate = a 1-acyl-sn-glycero-3-phosphate + phosphate. The protein operates within lipid metabolism; phospholipid metabolism. Functionally, catalyzes the transfer of an acyl group from acyl-phosphate (acyl-PO(4)) to glycerol-3-phosphate (G3P) to form lysophosphatidic acid (LPA). This enzyme utilizes acyl-phosphate as fatty acyl donor, but not acyl-CoA or acyl-ACP. The sequence is that of Glycerol-3-phosphate acyltransferase from Chromobacterium violaceum (strain ATCC 12472 / DSM 30191 / JCM 1249 / CCUG 213 / NBRC 12614 / NCIMB 9131 / NCTC 9757 / MK).